The primary structure comprises 389 residues: Diaminopimelate decarboxylase (389 aa).

Residue Lys-58 is modified to N6-(pyridoxal phosphate)lysine. Pyridoxal 5'-phosphate is bound by residues Gly-233 and 271–274 (ELGR). 5 residues coordinate substrate: Arg-274, Arg-310, Tyr-314, Glu-342, and Tyr-370. Tyr-370 is a binding site for pyridoxal 5'-phosphate.

The protein belongs to the Orn/Lys/Arg decarboxylase class-II family. LysA subfamily. As to quaternary structure, homodimer. Pyridoxal 5'-phosphate serves as cofactor.

It catalyses the reaction meso-2,6-diaminopimelate + H(+) = L-lysine + CO2. It participates in amino-acid biosynthesis; L-lysine biosynthesis via DAP pathway; L-lysine from DL-2,6-diaminopimelate: step 1/1. Its function is as follows. Specifically catalyzes the decarboxylation of meso-diaminopimelate (meso-DAP) to L-lysine. This chain is Diaminopimelate decarboxylase, found in Francisella tularensis subsp. holarctica (strain LVS).